A 525-amino-acid polypeptide reads, in one-letter code: DNA polymerase epsilon subunit 2 (525 aa).

This sequence belongs to the DNA polymerase epsilon subunit B family. In terms of assembly, component of the epsilon DNA polymerase complex consisting of four subunits: the catalytic subunit PolE1/DNApol-epsilon255 and the accessory subunits PolE2/DNApol-epsilon58, Chrac-14/DNApolE3 and PolE4.

The protein resides in the nucleus. In terms of biological role, accessory component of the DNA polymerase epsilon complex. Participates in DNA repair and in chromosomal DNA replication. Has a role in the entrance and progression through S phase. Has a role in endoreplication. Essential for viability and tissue development. This is DNA polymerase epsilon subunit 2 from Drosophila melanogaster (Fruit fly).